The following is a 618-amino-acid chain: Cell pattern formation-associated protein STU1 (618 aa).

The segment covering 13-28 has biased composition (polar residues); the sequence is MSAGPTQQPPTVTSYN. The segment at 13 to 105 is disordered; sequence MSAGPTQQPP…FDTSGQIAPP (93 aa). Low complexity predominate over residues 48-59; the sequence is YGGYPYTNGMPS. Positions 91-101 are enriched in polar residues; it reads NQYSGFDTSGQ. The HTH APSES-type domain occupies 110–216; the sequence is RVTATLWEDE…HNISALLYHP (107 aa). Residues 144 to 165 constitute a DNA-binding region (H-T-H motif); sequence GTKLLNVAGMTRGRRDGILKSE. Disordered regions lie at residues 229-355 and 390-618; these read AERR…YDGS and SEMG…SRRR. Polar residues-rich tracts occupy residues 256–266, 284–298, 305–326, and 336–355; these read MSQNGSQSLSG, TSASSAVNMGSSDSF, AMSNGQQNPMSIDTSLSNTRSM, and GSTLQSMQAYPPASQSYDGS. The segment covering 438 to 451 has biased composition (basic and acidic residues); sequence DHEHDPEYTHDSRT. Residues 452–476 show a composition bias toward polar residues; it reads YDNSQSQYNYTAPPVSSISSEQAHV. Residues 494 to 512 are compositionally biased toward low complexity; that stretch reads PRSAAAPQAYYQQAYSTSP. Residues 513-563 are compositionally biased toward polar residues; that stretch reads RSATHQSTSNLYNVMSNDRGSTTNGSANGDVYSQSTDLSNGYATPVTNGNA. The tract at residues 566 to 588 is nuclear localization domain; that stretch reads KRGRDDDDDRSSSSGQMDLKRRK.

The protein belongs to the EFG1/PHD1/stuA family.

Its subcellular location is the nucleus. In terms of biological role, transcription factor that regulates asexual reproduction. Binds the StuA-response elements (StRE) with the consensus sequence 5'-(A/T)CGCG(T/A)N(A/C)-3' at the promoters of target genes. Required for appressorium-mediated infection of rice leaves due to its involvement in the mobilization of lipids and glycogen. This Pyricularia oryzae (strain 70-15 / ATCC MYA-4617 / FGSC 8958) (Rice blast fungus) protein is Cell pattern formation-associated protein STU1.